We begin with the raw amino-acid sequence, 341 residues long: Serpentine receptor class beta-1 (341 aa).

Helical transmembrane passes span 22–42 (AQFW…IFLL), 66–86 (FLFA…PLFI), 102–122 (GQLS…GFSI), 141–161 (LGPL…FTVF), 188–208 (CWIL…ILLV), 240–260 (LIVS…TIFI), and 279–299 (GVYI…IKAL).

This sequence belongs to the nematode receptor-like protein srb family.

The protein localises to the membrane. This chain is Serpentine receptor class beta-1 (srb-1), found in Caenorhabditis elegans.